The following is a 439-amino-acid chain: Branched-chain amino acid permease BrnQ (439 aa).

Residues 1–9 (MTHQLKSRD) lie on the Cytoplasmic side of the membrane. The chain crosses the membrane as a helical span at residues 10 to 30 (IIALGFMTFALFVGAGNIIFP). Over 31-43 (PMVGLQAGEHVWT) the chain is Periplasmic. Residues 44-64 (AAIGFLITAVGLPVLTVVALA) traverse the membrane as a helical segment. The Cytoplasmic portion of the chain corresponds to 65–79 (KVGGGVDSLSTPIGK). Residues 80–100 (VAGLLLATVCYLAVGPLFATP) form a helical membrane-spanning segment. At 101-118 (RTATVSFEVGIAPLTGDS) the chain is on the periplasmic side. The chain crosses the membrane as a helical span at residues 119–139 (AMPLLIYSVVYFAIVILVSLY). At 140–149 (PGKLLDTVGN) the chain is on the cytoplasmic side. A helical transmembrane segment spans residues 150–170 (FLAPLKIIALVILSVAAIVWP). Topologically, residues 171–189 (AGPISNALDAYQNAAFSNG) are periplasmic. A helical membrane pass occupies residues 190–210 (FVNGYLTMDTLGAMVFGIVIV). The Cytoplasmic segment spans residues 211 to 226 (NAARSRGVTEARLLTR). The chain crosses the membrane as a helical span at residues 227–247 (YTVWAGLMAGVGLTLLYLALF). Residues 248 to 277 (RLGSDSATLVDQSANGAAILHAYVQHTFGG) are Periplasmic-facing. A helical transmembrane segment spans residues 278 to 298 (AGSFLLAALIFIACLVTAVGL). Topologically, residues 299–316 (TCACAEFFAQYIPLSYRT) are cytoplasmic. Residues 317–337 (LVFILGGFSMVVSNLGLSHLI) traverse the membrane as a helical segment. Glutamine 338 is a topological domain (periplasmic). Residues 339 to 359 (ISIPVLTAIYPPCIALVVLSF) form a helical membrane-spanning segment. The Cytoplasmic segment spans residues 360–369 (TRSWWHNSTR). Residues 370 to 390 (IIAPAMFISLLFGILDGIKAS) traverse the membrane as a helical segment. Over 391-404 (AFGDMLPAWSQRLP) the chain is Periplasmic. A helical transmembrane segment spans residues 405 to 425 (LAEQGLAWLMPTVVMVILAII). Residues 426–439 (WDRAAGRQVTSSAH) lie on the Cytoplasmic side of the membrane.

This sequence belongs to the branched chain amino acid transporter family.

The protein resides in the cell inner membrane. Functionally, liv-II branched chain amino acid transport system, which transports leucine, valine and isoleucine. This is Branched-chain amino acid permease BrnQ from Salmonella typhimurium (strain LT2 / SGSC1412 / ATCC 700720).